We begin with the raw amino-acid sequence, 270 residues long: Nuclease P1 (270 aa).

Trp1, His6, His15, Asp45, and His60 together coordinate a divalent metal cation. Trp1 to His6 serves as a coordination point for substrate. Substrate is bound by residues Asp45 to Ser51, His60 to Asp63, and Asn73 to Arg78. 2 cysteine pairs are disulfide-bonded: Cys72–Cys217 and Cys80–Cys85. Asn92 carries an N-linked (GlcNAc...) asparagine glycan. A divalent metal cation-binding residues include His116, Asp120, and His126. A substrate binding region spans residues His116 to His164. The N-linked (GlcNAc...) asparagine glycan is linked to Asn138. A divalent metal cation contacts are provided by His149 and Asp153. Residues Asn184 and Asn197 are each glycosylated (N-linked (GlcNAc...) asparagine).

The protein belongs to the nuclease type I family. Requires Zn(2+) as cofactor.

Its subcellular location is the secreted. It carries out the reaction Endonucleolytic cleavage to 5'-phosphomononucleotide and 5'-phosphooligonucleotide end-products.. Its function is as follows. Hydrolyzes only single-stranded DNA and RNA without apparent specificity for bases. The sequence is that of Nuclease P1 from Penicillium citrinum.